The primary structure comprises 77 residues: UPF0154 protein LCK_00994 (77 aa).

The chain crosses the membrane as a helical span at residues 5–25 (FGILIFVLGLVIGLVIGFFVA). A disordered region spans residues 50–77 (SMGQKPSQKKLNQMMAQMKQQSEQSQKK).

Belongs to the UPF0154 family.

It is found in the cell membrane. The chain is UPF0154 protein LCK_00994 from Leuconostoc citreum (strain KM20).